Here is a 286-residue protein sequence, read N- to C-terminus: Citrullinase (286 aa).

Positions 4–258 (IKVAVVQLSF…DDILYATFDF (255 aa)) constitute a CN hydrolase domain. E43 (proton acceptor) is an active-site residue. The active site involves K116. The Nucleophile role is filled by C153.

This sequence belongs to the carbon-nitrogen hydrolase superfamily.

It catalyses the reaction L-citrulline + H2O + 2 H(+) = L-ornithine + NH4(+) + CO2. Functionally, catalyzes the degradation of citrulline into ornithine, carbon dioxide and ammonia. Contributes to intramacrophage survival, in vivo growth and pathogenesis. The chain is Citrullinase from Francisella tularensis subsp. tularensis (strain SCHU S4 / Schu 4).